The following is a 299-amino-acid chain: F-actin-capping protein subunit alpha-3 (299 aa).

A phosphoserine mark is found at Ser-2 and Ser-290.

Belongs to the F-actin-capping protein alpha subunit family. In terms of assembly, component of the F-actin capping complex, composed of a heterodimer of an alpha and a beta subunit. Component of the WASH complex, composed of F-actin-capping protein subunit alpha (CAPZA1, CAPZA2 or CAPZA3), F-actin-capping protein subunit beta (CAPZB), WASHC1, WASHC2, WASHC3, WASHC4 and WASHC5. Exclusively expressed in the testis.

Its subcellular location is the cytoplasm. The protein resides in the cytoskeleton. Functionally, F-actin-capping proteins bind in a Ca(2+)-independent manner to the fast growing ends of actin filaments (barbed end) thereby blocking the exchange of subunits at these ends. Unlike other capping proteins (such as gelsolin and severin), these proteins do not sever actin filaments. May play a role in the morphogenesis of spermatid. In Rattus norvegicus (Rat), this protein is F-actin-capping protein subunit alpha-3 (Capza3).